We begin with the raw amino-acid sequence, 219 residues long: 2-hydroxy-3-keto-5-methylthiopentenyl-1-phosphate phosphatase (219 aa).

It belongs to the HAD-like hydrolase superfamily. MtnX family.

The catalysed reaction is 2-hydroxy-5-methylsulfanyl-3-oxopent-1-enyl phosphate + H2O = 1,2-dihydroxy-5-(methylsulfanyl)pent-1-en-3-one + phosphate. Its pathway is amino-acid biosynthesis; L-methionine biosynthesis via salvage pathway; L-methionine from S-methyl-5-thio-alpha-D-ribose 1-phosphate: step 4/6. Dephosphorylates 2-hydroxy-3-keto-5-methylthiopentenyl-1-phosphate (HK-MTPenyl-1-P) yielding 1,2-dihydroxy-3-keto-5-methylthiopentene (DHK-MTPene). This chain is 2-hydroxy-3-keto-5-methylthiopentenyl-1-phosphate phosphatase, found in Bacillus thuringiensis subsp. konkukian (strain 97-27).